A 162-amino-acid chain; its full sequence is Ribosome-binding factor A (162 aa).

The disordered stretch occupies residues 121–162 (DEVARVAAGASPAGDPDPYKEPRAEDADDAEVDEPSGSRQAD). Residues 125–136 (RVAAGASPAGDP) show a composition bias toward low complexity.

This sequence belongs to the RbfA family. In terms of assembly, monomer. Binds 30S ribosomal subunits, but not 50S ribosomal subunits or 70S ribosomes.

The protein resides in the cytoplasm. In terms of biological role, one of several proteins that assist in the late maturation steps of the functional core of the 30S ribosomal subunit. Associates with free 30S ribosomal subunits (but not with 30S subunits that are part of 70S ribosomes or polysomes). Required for efficient processing of 16S rRNA. May interact with the 5'-terminal helix region of 16S rRNA. This chain is Ribosome-binding factor A, found in Rhodococcus jostii (strain RHA1).